We begin with the raw amino-acid sequence, 364 residues long: Methylthioribose-1-phosphate isomerase (364 aa).

The Proton donor role is filled by D254.

Belongs to the eIF-2B alpha/beta/delta subunits family. MtnA subfamily.

The protein resides in the cytoplasm. The protein localises to the nucleus. It catalyses the reaction 5-(methylsulfanyl)-alpha-D-ribose 1-phosphate = 5-(methylsulfanyl)-D-ribulose 1-phosphate. It functions in the pathway amino-acid biosynthesis; L-methionine biosynthesis via salvage pathway; L-methionine from S-methyl-5-thio-alpha-D-ribose 1-phosphate: step 1/6. In terms of biological role, catalyzes the interconversion of methylthioribose-1-phosphate (MTR-1-P) into methylthioribulose-1-phosphate (MTRu-1-P). This Drosophila sechellia (Fruit fly) protein is Methylthioribose-1-phosphate isomerase.